Reading from the N-terminus, the 617-residue chain is Probable Xaa-Pro aminopeptidase P (617 aa).

Residues aspartate 414, aspartate 425, glutamate 523, and glutamate 537 each contribute to the Mn(2+) site.

This sequence belongs to the peptidase M24B family. Mn(2+) is required as a cofactor.

The enzyme catalyses Release of any N-terminal amino acid, including proline, that is linked to proline, even from a dipeptide or tripeptide.. Catalyzes the removal of a penultimate prolyl residue from the N-termini of peptides. This chain is Probable Xaa-Pro aminopeptidase P (AMPP), found in Colletotrichum graminicola (strain M1.001 / M2 / FGSC 10212) (Maize anthracnose fungus).